The chain runs to 236 residues: Endonuclease V (236 aa).

Mg(2+) contacts are provided by aspartate 47 and aspartate 115.

This sequence belongs to the endonuclease V family. Requires Mg(2+) as cofactor.

The protein resides in the cytoplasm. It catalyses the reaction Endonucleolytic cleavage at apurinic or apyrimidinic sites to products with a 5'-phosphate.. DNA repair enzyme involved in the repair of deaminated bases. Selectively cleaves double-stranded DNA at the second phosphodiester bond 3' to a deoxyinosine leaving behind the intact lesion on the nicked DNA. This is Endonuclease V from Xanthomonas campestris pv. campestris (strain B100).